Here is a 208-residue protein sequence, read N- to C-terminus: Large ribosomal subunit protein bL25 (208 aa).

The protein belongs to the bacterial ribosomal protein bL25 family. CTC subfamily. Part of the 50S ribosomal subunit; part of the 5S rRNA/L5/L18/L25 subcomplex. Contacts the 5S rRNA. Binds to the 5S rRNA independently of L5 and L18.

Its function is as follows. This is one of the proteins that binds to the 5S RNA in the ribosome where it forms part of the central protuberance. This is Large ribosomal subunit protein bL25 from Bordetella pertussis (strain Tohama I / ATCC BAA-589 / NCTC 13251).